Reading from the N-terminus, the 465-residue chain is uncharacterized protein (465 aa).

The next 11 membrane-spanning stretches (helical) occupy residues 19–39 (VLGP…GEYM), 50–70 (MIAG…VAMI), 91–111 (IVGP…YTML), 140–160 (FIVL…LATL), 164–184 (LVIT…VQFG), 201–221 (PYGW…YLGI), 244–264 (AGIM…SGLM), 288–308 (LMVL…NGCI), 342–362 (IVFL…DQVV), 363–383 (TFSI…MVMF), and 403–423 (LPTV…FLGY).

It belongs to the amino acid-polyamine-organocation (APC) superfamily.

The protein resides in the cell membrane. Probable amino-acid or metabolite transport protein. This is an uncharacterized protein from Rhizobium meliloti (strain 1021) (Ensifer meliloti).